Consider the following 354-residue polypeptide: Tetraacyldisaccharide 4'-kinase (354 aa).

53 to 60 (AWGGTGKT) is a binding site for ATP.

This sequence belongs to the LpxK family.

It carries out the reaction a lipid A disaccharide + ATP = a lipid IVA + ADP + H(+). It functions in the pathway glycolipid biosynthesis; lipid IV(A) biosynthesis; lipid IV(A) from (3R)-3-hydroxytetradecanoyl-[acyl-carrier-protein] and UDP-N-acetyl-alpha-D-glucosamine: step 6/6. Transfers the gamma-phosphate of ATP to the 4'-position of a tetraacyldisaccharide 1-phosphate intermediate (termed DS-1-P) to form tetraacyldisaccharide 1,4'-bis-phosphate (lipid IVA). In Nitratidesulfovibrio vulgaris (strain ATCC 29579 / DSM 644 / CCUG 34227 / NCIMB 8303 / VKM B-1760 / Hildenborough) (Desulfovibrio vulgaris), this protein is Tetraacyldisaccharide 4'-kinase.